Here is a 337-residue protein sequence, read N- to C-terminus: Eukaryotic translation initiation factor 3 subunit I (337 aa).

5 WD repeats span residues 8–47 (GHERSLNQIKFNRDGDLIFSVAKDKIVCAWWSANGERLGT), 50–91 (GHQG…KVWD), 147–186 (CTESKATVAGWSYMGKYIIAGHEDGSVSQYDGKTGEQLEN), 191–230 (EFDHQINDIQFSADRTYFITASKDKSAKLMSTRNLAILKT), and 288–327 (GHFGPLNTVHIHPAGTAYASGGEDGYVRVHHFDKPYFDFM).

This sequence belongs to the eIF-3 subunit I family. Component of the eukaryotic translation initiation factor 3 (eIF-3) complex.

The protein resides in the cytoplasm. Its function is as follows. Component of the eukaryotic translation initiation factor 3 (eIF-3) complex, which is involved in protein synthesis of a specialized repertoire of mRNAs and, together with other initiation factors, stimulates binding of mRNA and methionyl-tRNAi to the 40S ribosome. The eIF-3 complex specifically targets and initiates translation of a subset of mRNAs involved in cell proliferation. The polypeptide is Eukaryotic translation initiation factor 3 subunit I (tif34) (Aspergillus niger (strain ATCC MYA-4892 / CBS 513.88 / FGSC A1513)).